The sequence spans 216 residues: Small ribosomal subunit protein uS2 (216 aa).

This sequence belongs to the universal ribosomal protein uS2 family.

The sequence is that of Small ribosomal subunit protein uS2 from Carsonella ruddii (strain PV).